The chain runs to 310 residues: Olfactory receptor 5P56 (310 aa).

Over 1-25 the chain is Extracellular; it reads MEAQNHTTVKEFILLGLTENSTLRV. N-linked (GlcNAc...) asparagine glycosylation is found at N5 and N20. Residues 26 to 46 traverse the membrane as a helical segment; it reads ILFMIFLGIYTVTLVGNFSII. At 47–54 the chain is on the cytoplasmic side; it reads SLIRSCPQ. The helical transmembrane segment at 55 to 75 threads the bilayer; it reads LHTPMYLFLSHLALVDIGFST. At 76-99 the chain is on the extracellular side; that stretch reads SITPIMLTGFLGHTVTLSVAACVA. A disulfide bond links C97 and C189. The helical transmembrane segment at 100–120 threads the bilayer; sequence QFCIAVTFGTVECFLLAVMAY. Topologically, residues 121 to 133 are cytoplasmic; that stretch reads DRYVAICSPLLYS. A helical transmembrane segment spans residues 134 to 154; the sequence is THMSPRICFLLVGASYVGGCV. Topologically, residues 155–196 are extracellular; it reads NSGTFTSCLLILSFCGPNQIDHFFCDFPAVLKLSCSDVSIIG. The chain crosses the membrane as a helical span at residues 197–217; the sequence is IIPSISAGSIIVITVFVIAVS. Topologically, residues 218–237 are cytoplasmic; it reads YTYILITILNMRSTEGRHKA. A helical membrane pass occupies residues 238 to 258; that stretch reads FSTCTSHLTAVTLYYGTITFI. Topologically, residues 259–271 are extracellular; the sequence is YVMPKSNYSTAQN. N265 carries N-linked (GlcNAc...) asparagine glycosylation. Residues 272–292 form a helical membrane-spanning segment; that stretch reads KILSVFYTVVIPMLNPLIYSL. Residues 293–310 are Cytoplasmic-facing; sequence RNRDVKEALRKAIIRIFP.

This sequence belongs to the G-protein coupled receptor 1 family.

Its subcellular location is the cell membrane. Its function is as follows. Potential odorant receptor. In Mus musculus (Mouse), this protein is Olfactory receptor 5P56.